We begin with the raw amino-acid sequence, 152 residues long: MSQLCPCGSALEYSSCCQRYLSGAELAPGPSQLMRSRYSAFVMKDADYLIKTWHPSCQAQTFRAELEKGFSQTEWLGLTLFASDERRVPNEGFASFVARFNDNNRPGAIIERSRFLKENGQWYYIDGTRPLIGRNDPCPCGSGKKFKKCCGQ.

Belongs to the UPF0225 family.

In Klebsiella pneumoniae (strain 342), this protein is UPF0225 protein KPK_2103.